A 283-amino-acid polypeptide reads, in one-letter code: 4-diphosphocytidyl-2-C-methyl-D-erythritol kinase (283 aa).

Lysine 10 is an active-site residue. 99-109 (PMGGGLGGGSS) lines the ATP pocket. Aspartate 141 is a catalytic residue.

It belongs to the GHMP kinase family. IspE subfamily. Homodimer.

The catalysed reaction is 4-CDP-2-C-methyl-D-erythritol + ATP = 4-CDP-2-C-methyl-D-erythritol 2-phosphate + ADP + H(+). Its pathway is isoprenoid biosynthesis; isopentenyl diphosphate biosynthesis via DXP pathway; isopentenyl diphosphate from 1-deoxy-D-xylulose 5-phosphate: step 3/6. In terms of biological role, catalyzes the phosphorylation of the position 2 hydroxy group of 4-diphosphocytidyl-2C-methyl-D-erythritol. In Salmonella enteritidis PT4 (strain P125109), this protein is 4-diphosphocytidyl-2-C-methyl-D-erythritol kinase.